Reading from the N-terminus, the 130-residue chain is MHAVSSSHLFYLAFCLLVLTSSATAGPETLCGAELVDALQFVCGDRGFYFNKPTGYGSSSRRAPQTGIVDECCFRSCDLRRLEMYCAPLKPAKSARSVRAQRHTDMPKTQKEVHLKNASRGSAGNKNYRM.

The signal sequence occupies residues 1–25 (MHAVSSSHLFYLAFCLLVLTSSATA). Residues 26 to 54 (GPETLCGAELVDALQFVCGDRGFYFNKPT) form a b region. Cystine bridges form between cysteine 31–cysteine 73, cysteine 43–cysteine 86, and cysteine 72–cysteine 77. The tract at residues 55–66 (GYGSSSRRAPQT) is c. The a stretch occupies residues 67-87 (GIVDECCFRSCDLRRLEMYCA). The d stretch occupies residues 88–95 (PLKPAKSA). Residues 96-130 (RSVRAQRHTDMPKTQKEVHLKNASRGSAGNKNYRM) constitute a propeptide, e peptide. Residues 97–130 (SVRAQRHTDMPKTQKEVHLKNASRGSAGNKNYRM) are disordered. Positions 102–115 (RHTDMPKTQKEVHL) are enriched in basic and acidic residues. Polar residues predominate over residues 119–130 (SRGSAGNKNYRM).

Belongs to the insulin family. As to quaternary structure, forms a ternary complex with IGFR1 and ITGAV:ITGB3. Forms a ternary complex with IGFR1 and ITGA6:ITGB4. Forms a ternary complex with IGFBP3 and ALS.

Its subcellular location is the secreted. Functionally, the insulin-like growth factors, isolated from plasma, are structurally and functionally related to insulin but have a much higher growth-promoting activity. May be a physiological regulator of [1-14C]-2-deoxy-D-glucose (2DG) transport and glycogen synthesis in osteoblasts. Stimulates glucose transport in bone-derived osteoblastic (PyMS) cells and is effective at much lower concentrations than insulin, not only regarding glycogen and DNA synthesis but also with regard to enhancing glucose uptake. May play a role in synapse maturation. Ca(2+)-dependent exocytosis of IGF1 is required for sensory perception of smell in the olfactory bulb. Acts as a ligand for IGF1R. Binds to the alpha subunit of IGF1R, leading to the activation of the intrinsic tyrosine kinase activity which autophosphorylates tyrosine residues in the beta subunit thus initiating a cascade of down-stream signaling events leading to activation of the PI3K-AKT/PKB and the Ras-MAPK pathways. Binds to integrins ITGAV:ITGB3 and ITGA6:ITGB4. Its binding to integrins and subsequent ternary complex formation with integrins and IGFR1 are essential for IGF1 signaling. Induces the phosphorylation and activation of IGFR1, MAPK3/ERK1, MAPK1/ERK2 and AKT1. As part of the MAPK/ERK signaling pathway, acts as a negative regulator of apoptosis in cardiomyocytes via promotion of STUB1/CHIP-mediated ubiquitination and degradation of ICER-type isoforms of CREM. The polypeptide is Insulin-like growth factor 1 (Cavia porcellus (Guinea pig)).